A 267-amino-acid chain; its full sequence is MKKTQTWIITCIYLQLLLFNPLVHTQGICRNRVTDDVKDVTKLVANLPKDYMITLKYVPGMDVLPSHCWISEMVEQLSVSLTDLLDKFSNISEGLSNYSIIDKLVKIVDDLVECMEEHSFENVKKSSKSPEPRQFTPEKFFGIFNKSIDAFKDLEIVASTMSECVISSTSSPEKDSRVSVTKPFMLPPVAASSLRNDSSSSNRKASNSIEDSSLQWAAVALPAFFSLVIGFAFGALYWKKKQPNLTRTVENRQINEEDNEISMLQEK.

A signal peptide spans 1–25 (MKKTQTWIITCIYLQLLLFNPLVHT). Glutamine 26 bears the Pyrrolidone carboxylic acid mark. Topologically, residues 26 to 215 (QGICRNRVTD…SNSIEDSSLQ (190 aa)) are extracellular. 2 disulfides stabilise this stretch: cysteine 29–cysteine 114 and cysteine 68–cysteine 164. Asparagine 90, asparagine 97, asparagine 145, and asparagine 196 each carry an N-linked (GlcNAc...) asparagine glycan. Residues 216 to 238 (WAAVALPAFFSLVIGFAFGALYW) form a helical membrane-spanning segment. The Cytoplasmic segment spans residues 239–267 (KKKQPNLTRTVENRQINEEDNEISMLQEK).

The protein belongs to the SCF family. In terms of assembly, homodimer, non-covalently linked. Heterotetramer with KIT, binding two KIT molecules; thereby mediates KIT dimerization and subsequent activation by autophosphorylation. A soluble form is produced by proteolytic processing of the extracellular domain.

It is found in the cytoplasm. Its subcellular location is the cytoskeleton. The protein resides in the cell membrane. It localises to the cell projection. The protein localises to the lamellipodium. It is found in the filopodium. Its subcellular location is the secreted. In terms of biological role, ligand for the receptor-type protein-tyrosine kinase KIT. Plays an essential role in the regulation of cell survival and proliferation, hematopoiesis, stem cell maintenance, gametogenesis, mast cell development, migration and function, and in melanogenesis. KITLG/SCF binding can activate several signaling pathways. Promotes phosphorylation of PIK3R1, the regulatory subunit of phosphatidylinositol 3-kinase, and subsequent activation of the kinase AKT1. KITLG/SCF and KIT also transmit signals via GRB2 and activation of RAS, RAF1 and the MAP kinases MAPK1/ERK2 and/or MAPK3/ERK1. KITLG/SCF and KIT promote activation of STAT family members STAT1, STAT3 and STAT5. KITLG/SCF and KIT promote activation of PLCG1, leading to the production of the cellular signaling molecules diacylglycerol and inositol 1,4,5-trisphosphate. KITLG/SCF acts synergistically with other cytokines, probably interleukins. This Ovis aries (Sheep) protein is Kit ligand (KITLG).